We begin with the raw amino-acid sequence, 1256 residues long: Splicing factor, arginine/serine-rich 19 (1256 aa).

6 disordered regions span residues 1 to 33, 158 to 343, 371 to 395, 408 to 1030, 1112 to 1152, and 1221 to 1256; these read MEEEDESRGKTEESGEDRGDGPPDRDPALSPSA, GKTV…APRR, ALSLPPLPPTDPEIEEGEIVQPEEE, PRQP…TLPP, GSLP…DKYL, and FRKHGRKPGDPPGPPRPPKEPGPPDKGGPGLPLPPL. Positions 7–27 are enriched in basic and acidic residues; that stretch reads SRGKTEESGEDRGDGPPDRDP. A compositionally biased stretch (low complexity) spans 192–206; the sequence is SSASSSPSPSPSSSS. Over residues 207–222 the composition is skewed to pro residues; that stretch reads PSPPPPPPPPPPPALP. Basic and acidic residues predominate over residues 227-236; sequence DIYDPFHPTD. At Ser240 the chain carries Phosphoserine. The span at 255 to 265 shows a compositional bias: polar residues; the sequence is TGSNPSSSAGT. Acidic residues predominate over residues 268-282; sequence PEEEEEEEEEEEEEG. A Phosphothreonine modification is found at Thr328. Residues 382-393 are compositionally biased toward acidic residues; the sequence is PEIEEGEIVQPE. A compositionally biased stretch (low complexity) spans 412-424; that stretch reads PASVATLASVAAP. Phosphoserine occurs at positions 442 and 447. Over residues 478 to 489 the composition is skewed to basic residues; the sequence is KILTQRRERYRQ. Ser491, Ser493, Ser510, Ser518, and Ser520 each carry phosphoserine. 2 stretches are compositionally biased toward basic residues: residues 538-553 and 560-577; these read TARRRSRSRSRRRSRS and RGGHRSRSREKRRRRRRS. Phosphoserine occurs at positions 577 and 579. Residues 592–611 show a composition bias toward basic residues; it reads RERHRGKRREGGKKKKKRSR. The segment covering 612–623 has biased composition (basic and acidic residues); that stretch reads SRAEKRSGDLEK. Thr663 is subject to Phosphothreonine. 2 positions are modified to phosphoserine: Ser676 and Ser682. Tyr689 bears the Phosphotyrosine mark. Phosphoserine is present on residues Ser691 and Ser695. 2 stretches are compositionally biased toward basic and acidic residues: residues 696-709 and 719-741; these read ADERGGKSDKDRRR and SREKGSRRKALDGDRGRDRDRSS. Composition is skewed to low complexity over residues 752 to 775 and 793 to 804; these read PGSGPLPKAPPSSGSSSSSSSCSS and SSTTPAKDSSSS. Residue Lys812 forms a Glycyl lysine isopeptide (Lys-Gly) (interchain with G-Cter in SUMO2) linkage. Residues 813–831 show a composition bias toward basic and acidic residues; it reads FSRDRESRSPFLKPDERAP. Residues Ser819 and Ser821 each carry the phosphoserine modification. The segment covering 843 to 875 has biased composition (basic residues); that stretch reads KPKKTKAKAKAGAKKAKGTKGKTKPSKTRKKVR. Phosphoserine is present on residues Ser876, Ser883, Ser910, and Ser912. Over residues 922-935 the composition is skewed to pro residues; sequence STPPPKVAPPPPAL. Phosphothreonine is present on residues Thr923 and Thr936. A compositionally biased stretch (polar residues) spans 938 to 947; that stretch reads DSQTVDSSCK. Position 939 is a phosphoserine (Ser939). Residue Thr948 is modified to Phosphothreonine. Acidic residues predominate over residues 969–984; it reads EEEEEEEEEEEEEEEQ. The segment covering 985 to 1017 has biased composition (low complexity); it reads QPATTTATSTAAAAPSTAPSAGSTAGDSGAEDG. The interval 1131 to 1256 is necessary for interaction with the CTD domain of POLR2A; sequence PASDKREGSS…GGPGLPLPPL (126 aa). A compositionally biased stretch (basic and acidic residues) spans 1133–1152; it reads SDKREGSSSSEGRGDTDKYL. Residues 1244-1256 are compositionally biased toward pro residues; it reads PDKGGPGLPLPPL.

The protein belongs to the splicing factor SR family. Interacts with POLR2A.

It localises to the nucleus. May function in pre-mRNA splicing. This is Splicing factor, arginine/serine-rich 19 (Scaf1) from Mus musculus (Mouse).